Consider the following 463-residue polypeptide: Glycine--tRNA ligase (463 aa).

Substrate-binding residues include Arg-100 and Glu-175. Residues 207–209 (RNE), 217–222 (FRTREF), 291–292 (EL), and 335–338 (GADR) contribute to the ATP site. 222 to 226 (FEQME) serves as a coordination point for substrate. 331–335 (EPSVG) provides a ligand contact to substrate.

It belongs to the class-II aminoacyl-tRNA synthetase family. Homodimer.

It is found in the cytoplasm. It carries out the reaction tRNA(Gly) + glycine + ATP = glycyl-tRNA(Gly) + AMP + diphosphate. Catalyzes the attachment of glycine to tRNA(Gly). The sequence is that of Glycine--tRNA ligase from Clostridium kluyveri (strain NBRC 12016).